The chain runs to 124 residues: UPF0102 protein TM1040_0449 (124 aa).

Belongs to the UPF0102 family.

This Ruegeria sp. (strain TM1040) (Silicibacter sp.) protein is UPF0102 protein TM1040_0449.